We begin with the raw amino-acid sequence, 411 residues long: Argininosuccinate lyase (411 aa).

Belongs to the lyase 1 family. Argininosuccinate lyase subfamily.

It is found in the cytoplasm. The enzyme catalyses 2-(N(omega)-L-arginino)succinate = fumarate + L-arginine. The protein operates within amino-acid biosynthesis; L-arginine biosynthesis; L-arginine from L-ornithine and carbamoyl phosphate: step 3/3. This chain is Argininosuccinate lyase, found in Legionella pneumophila (strain Paris).